Reading from the N-terminus, the 360-residue chain is Magnesium-protoporphyrin IX monomethyl ester [oxidative] cyclase (360 aa).

A disordered region spans residues 1 to 21 (MPPTAVTEATAVPGSNVTTKD).

Belongs to the AcsF family. Fe cation serves as cofactor.

The enzyme catalyses Mg-protoporphyrin IX 13-monomethyl ester + 3 NADPH + 3 O2 + 2 H(+) = 3,8-divinyl protochlorophyllide a + 3 NADP(+) + 5 H2O. It functions in the pathway porphyrin-containing compound metabolism; chlorophyll biosynthesis (light-independent). Catalyzes the formation of the isocyclic ring in chlorophyll biosynthesis. Mediates the cyclase reaction, which results in the formation of divinylprotochlorophyllide (Pchlide) characteristic of all chlorophylls from magnesium-protoporphyrin IX 13-monomethyl ester (MgPMME). The sequence is that of Magnesium-protoporphyrin IX monomethyl ester [oxidative] cyclase from Synechococcus sp. (strain CC9311).